The primary structure comprises 387 residues: Large ribosomal subunit protein uL3 (387 aa).

This sequence belongs to the universal ribosomal protein uL3 family.

Its subcellular location is the cytoplasm. The polypeptide is Large ribosomal subunit protein uL3 (RPL3) (Candida glabrata (strain ATCC 2001 / BCRC 20586 / JCM 3761 / NBRC 0622 / NRRL Y-65 / CBS 138) (Yeast)).